The following is a 368-amino-acid chain: RAB6-interacting golgin (368 aa).

Disordered regions lie at residues 1–43, 55–133, and 302–368; these read MAQD…REKA, DGSA…DCKV, and KQMA…AVAT. A compositionally biased stretch (basic and acidic residues) spans 11–27; sequence EELRRLKQNKDPFEPQR. The segment covering 80-89 has biased composition (pro residues); that stretch reads SPSPVAPSPL. Over residues 114 to 133 the composition is skewed to basic and acidic residues; the sequence is NSHHGHKSAEVRAPKPDCKV. Residues 145–310 adopt a coiled-coil conformation; the sequence is RWEVLQQEQR…AKQMASVERL (166 aa). The tract at residues 188–368 is necessary for interaction with RCHY1; the sequence is IQKELQALDD…AKNFSAAVAT (181 aa).

The protein belongs to the GORAB family. In terms of assembly, interacts with RCHY1. Interacts with SCYL1 and RAB6A/RAB6. As to expression, expressed in small intestine, kidney, skeletal muscle, lung, spleen, brain and heart. High expression is observed in osteoblasts and skin; also expressed in osteoclasts albeit at lower levels.

The protein localises to the cytoplasm. It is found in the golgi apparatus. The polypeptide is RAB6-interacting golgin (Gorab) (Mus musculus (Mouse)).